A 27-amino-acid chain; its full sequence is Potassium channel toxin kappa-KTx 2.2 (27 aa).

2 disulfides stabilise this stretch: C3–C21 and C7–C17.

The protein belongs to the short scorpion toxin superfamily. Potassium channel inhibitor kappa-KTx family. Kappa-KTx 2 subfamily. Expressed by the venom gland.

The protein resides in the secreted. OmTx1 decreases the amplitude of the potassium current of the rat channels Kv1.1/KCNA1 by 17% and Kv1.2/KCNA2 by 12% as well as human Kv1.3/KCNA3 by 24%. Functionally, omTx2 decreases the amplitude of the potassium current of the rat channels Kv1.1/KCNA1 by 8% and Kv1.2/KCNA2 by 10% as well as human Kv1.3/KCNA3 by 36%. Also alters glucose-induced insulin release from pancreatic islets. The chain is Potassium channel toxin kappa-KTx 2.2 from Opisthacanthus madagascariensis (Scorpion).